Reading from the N-terminus, the 433-residue chain is Pyrimidine-nucleoside phosphorylase (433 aa).

81–83 provides a ligand contact to phosphate; sequence KHS. Residues Gly-88 and Thr-90 each contribute to the K(+) site. Residues Thr-92, 108–110, and Thr-120 each bind phosphate; that span reads KMS. Substrate is bound by residues Arg-168 and Lys-187. Leu-243, Ala-246, and Glu-255 together coordinate K(+).

It belongs to the thymidine/pyrimidine-nucleoside phosphorylase family. As to quaternary structure, homodimer. The cofactor is K(+).

The catalysed reaction is uridine + phosphate = alpha-D-ribose 1-phosphate + uracil. The enzyme catalyses thymidine + phosphate = 2-deoxy-alpha-D-ribose 1-phosphate + thymine. It catalyses the reaction 2'-deoxyuridine + phosphate = 2-deoxy-alpha-D-ribose 1-phosphate + uracil. In terms of biological role, catalyzes phosphorolysis of the pyrimidine nucleosides uridine, thymidine and 2'-deoxyuridine with the formation of the corresponding pyrimidine base and ribose-1-phosphate. This Staphylococcus aureus (strain Mu50 / ATCC 700699) protein is Pyrimidine-nucleoside phosphorylase (pdp).